A 278-amino-acid chain; its full sequence is Pantothenate synthetase (278 aa).

ATP is bound at residue 30 to 37 (MGFLHEGH). Residue His37 is the Proton donor of the active site. Gln61 serves as a coordination point for (R)-pantoate. Gln61 contacts beta-alanine. 147–150 (GQKD) lines the ATP pocket. Gln153 lines the (R)-pantoate pocket. ATP is bound by residues Val176 and 184–187 (LSSR).

It belongs to the pantothenate synthetase family. In terms of assembly, homodimer.

Its subcellular location is the cytoplasm. The enzyme catalyses (R)-pantoate + beta-alanine + ATP = (R)-pantothenate + AMP + diphosphate + H(+). It participates in cofactor biosynthesis; (R)-pantothenate biosynthesis; (R)-pantothenate from (R)-pantoate and beta-alanine: step 1/1. Functionally, catalyzes the condensation of pantoate with beta-alanine in an ATP-dependent reaction via a pantoyl-adenylate intermediate. This Thermosipho africanus (strain TCF52B) protein is Pantothenate synthetase.